The following is a 513-amino-acid chain: ATP synthase subunit alpha (513 aa).

169–176 (GDRQTGKT) contacts ATP.

It belongs to the ATPase alpha/beta chains family. As to quaternary structure, F-type ATPases have 2 components, CF(1) - the catalytic core - and CF(0) - the membrane proton channel. CF(1) has five subunits: alpha(3), beta(3), gamma(1), delta(1), epsilon(1). CF(0) has three main subunits: a(1), b(2) and c(9-12). The alpha and beta chains form an alternating ring which encloses part of the gamma chain. CF(1) is attached to CF(0) by a central stalk formed by the gamma and epsilon chains, while a peripheral stalk is formed by the delta and b chains.

It localises to the cell inner membrane. The catalysed reaction is ATP + H2O + 4 H(+)(in) = ADP + phosphate + 5 H(+)(out). Its function is as follows. Produces ATP from ADP in the presence of a proton gradient across the membrane. The alpha chain is a regulatory subunit. The chain is ATP synthase subunit alpha from Salmonella paratyphi C (strain RKS4594).